Reading from the N-terminus, the 294-residue chain is Phosphatidylglycerol--prolipoprotein diacylglyceryl transferase (294 aa).

Transmembrane regions (helical) follow at residues 19–39, 69–89, 101–121, 139–159, 195–215, 224–244, and 267–287; these read VFGF…GIVL, LLTW…VFFY, ILAV…VIAA, IMAL…FINA, QLYE…WLVW, GYVA…VEFF, and WGLT…IWLI. Position 152 (arginine 152) interacts with a 1,2-diacyl-sn-glycero-3-phospho-(1'-sn-glycerol).

The protein belongs to the Lgt family.

The protein localises to the cell inner membrane. It carries out the reaction L-cysteinyl-[prolipoprotein] + a 1,2-diacyl-sn-glycero-3-phospho-(1'-sn-glycerol) = an S-1,2-diacyl-sn-glyceryl-L-cysteinyl-[prolipoprotein] + sn-glycerol 1-phosphate + H(+). It participates in protein modification; lipoprotein biosynthesis (diacylglyceryl transfer). In terms of biological role, catalyzes the transfer of the diacylglyceryl group from phosphatidylglycerol to the sulfhydryl group of the N-terminal cysteine of a prolipoprotein, the first step in the formation of mature lipoproteins. The chain is Phosphatidylglycerol--prolipoprotein diacylglyceryl transferase from Roseobacter denitrificans (strain ATCC 33942 / OCh 114) (Erythrobacter sp. (strain OCh 114)).